Consider the following 417-residue polypeptide: NADH-quinone oxidoreductase subunit D (417 aa).

This sequence belongs to the complex I 49 kDa subunit family. In terms of assembly, NDH-1 is composed of 14 different subunits. Subunits NuoB, C, D, E, F, and G constitute the peripheral sector of the complex.

The protein localises to the cell inner membrane. The enzyme catalyses a quinone + NADH + 5 H(+)(in) = a quinol + NAD(+) + 4 H(+)(out). Functionally, NDH-1 shuttles electrons from NADH, via FMN and iron-sulfur (Fe-S) centers, to quinones in the respiratory chain. The immediate electron acceptor for the enzyme in this species is believed to be ubiquinone. Couples the redox reaction to proton translocation (for every two electrons transferred, four hydrogen ions are translocated across the cytoplasmic membrane), and thus conserves the redox energy in a proton gradient. The polypeptide is NADH-quinone oxidoreductase subunit D (Janthinobacterium sp. (strain Marseille) (Minibacterium massiliensis)).